We begin with the raw amino-acid sequence, 244 residues long: 1-(5-phosphoribosyl)-5-[(5-phosphoribosylamino)methylideneamino] imidazole-4-carboxamide isomerase (244 aa).

Residue Asp7 is the Proton acceptor of the active site. Asp129 (proton donor) is an active-site residue.

Belongs to the HisA/HisF family.

The protein resides in the cytoplasm. It carries out the reaction 1-(5-phospho-beta-D-ribosyl)-5-[(5-phospho-beta-D-ribosylamino)methylideneamino]imidazole-4-carboxamide = 5-[(5-phospho-1-deoxy-D-ribulos-1-ylimino)methylamino]-1-(5-phospho-beta-D-ribosyl)imidazole-4-carboxamide. Its pathway is amino-acid biosynthesis; L-histidine biosynthesis; L-histidine from 5-phospho-alpha-D-ribose 1-diphosphate: step 4/9. In Pseudoalteromonas atlantica (strain T6c / ATCC BAA-1087), this protein is 1-(5-phosphoribosyl)-5-[(5-phosphoribosylamino)methylideneamino] imidazole-4-carboxamide isomerase.